The following is a 226-amino-acid chain: UPF0758 protein PSEEN5431 (226 aa).

Residues 102–224 (VMDNPLAVRR…PLSMIEHGWL (123 aa)) enclose the MPN domain. 3 residues coordinate Zn(2+): His173, His175, and Asp186. Residues 173–186 (HNHPSGNCEPSQDD) carry the JAMM motif motif.

The protein belongs to the UPF0758 family.

In Pseudomonas entomophila (strain L48), this protein is UPF0758 protein PSEEN5431.